Here is a 62-residue protein sequence, read N- to C-terminus: Metallothionein-like protein 3A (62 aa).

It belongs to the metallothionein superfamily. Type 15 family.

Functionally, metallothioneins have a high content of cysteine residues that bind various heavy metals. In Oryza sativa subsp. indica (Rice), this protein is Metallothionein-like protein 3A (MT3A).